Reading from the N-terminus, the 204-residue chain is 8-oxoguanine DNA glycosylase/AP lyase (204 aa).

Catalysis depends on residues Lys128 and Asp146.

It belongs to the type-2 OGG1 family.

The enzyme catalyses 2'-deoxyribonucleotide-(2'-deoxyribose 5'-phosphate)-2'-deoxyribonucleotide-DNA = a 3'-end 2'-deoxyribonucleotide-(2,3-dehydro-2,3-deoxyribose 5'-phosphate)-DNA + a 5'-end 5'-phospho-2'-deoxyribonucleoside-DNA + H(+). Functionally, catalyzes the excision of an oxidatively damaged form of guanine (7,8-dihydro-8-oxoguanine = 8-oxoG) from DNA. Also cleaves the DNA backbone at apurinic/apyrimidinic sites (AP sites). This chain is 8-oxoguanine DNA glycosylase/AP lyase, found in Sulfurisphaera tokodaii (strain DSM 16993 / JCM 10545 / NBRC 100140 / 7) (Sulfolobus tokodaii).